A 101-amino-acid polypeptide reads, in one-letter code: Protein PIP-1 (101 aa).

An N-terminal signal peptide occupies residues 1–23 (MGKCLLLPLLLVVLSSLLGFPQA). In terms of domain architecture, UPAR/Ly6 spans 24-101 (LECFQCQRVS…CHDSPFCNKF (78 aa)). Intrachain disulfides connect Cys-26–Cys-53, Cys-29–Cys-38, Cys-45–Cys-71, Cys-75–Cys-91, and Cys-92–Cys-98. An N-linked (GlcNAc...) asparagine glycan is attached at Asn-84.

The protein resides in the secreted. The chain is Protein PIP-1 from Sus scrofa (Pig).